The sequence spans 292 residues: ATP synthase gamma chain (292 aa).

It belongs to the ATPase gamma chain family. As to quaternary structure, F-type ATPases have 2 components, CF(1) - the catalytic core - and CF(0) - the membrane proton channel. CF(1) has five subunits: alpha(3), beta(3), gamma(1), delta(1), epsilon(1). CF(0) has three main subunits: a, b and c.

It localises to the cell inner membrane. Its function is as follows. Produces ATP from ADP in the presence of a proton gradient across the membrane. The gamma chain is believed to be important in regulating ATPase activity and the flow of protons through the CF(0) complex. The protein is ATP synthase gamma chain of Nautilia profundicola (strain ATCC BAA-1463 / DSM 18972 / AmH).